Consider the following 293-residue polypeptide: Protein bcp-1 (293 aa).

Residues M1–K12 are compositionally biased toward basic and acidic residues. The tract at residues M1–E35 is disordered. Residues M24–E35 show a composition bias toward acidic residues.

This sequence belongs to the BCP1 family.

Its subcellular location is the cytoplasm. The protein localises to the nucleus. Its function is as follows. Involved in nuclear export, actin cytoskeleton organization and vesicular transport. This Neurospora crassa (strain ATCC 24698 / 74-OR23-1A / CBS 708.71 / DSM 1257 / FGSC 987) protein is Protein bcp-1 (bcp-1).